Here is a 308-residue protein sequence, read N- to C-terminus: Neurexophilin-4 (308 aa).

The first 23 residues, 1–23, serve as a signal peptide directing secretion; sequence MRLLPEWFLLLFGPWLLRKAVSA. The II stretch occupies residues 24–84; sequence QIPESGRPQY…GALARAGAAG (61 aa). The segment covering 40–51 has biased composition (low complexity); sequence AAGAGAPGQQLP. Positions 40–59 are disordered; the sequence is AAGAGAPGQQLPEPRSSDGL. Residues asparagine 72, asparagine 133, asparagine 143, and asparagine 149 are each glycosylated (N-linked (GlcNAc...) asparagine). The interval 85–163 is III; the sequence is ALPAQRTKRK…IVPPSKRVEF (79 aa). The interval 164-224 is IV (linker domain); the sequence is GGVWLPGPVP…PLGGALGVPG (61 aa). The tract at residues 225-308 is v (Cys-rich); the sequence is AKESRAFNCH…NFQSEHPYFG (84 aa).

Belongs to the neurexophilin family. May be proteolytically processed at the boundary between the N-terminal non-conserved and the central conserved domain in neuron-like cells. Expressed in brain, spleen, and testis.

It localises to the secreted. Functionally, may be signaling molecules that resemble neuropeptides and that act by binding to alpha-neurexins and possibly other receptors. The sequence is that of Neurexophilin-4 (NXPH4) from Homo sapiens (Human).